We begin with the raw amino-acid sequence, 874 residues long: DNA primase (874 aa).

The CHC2-type zinc finger occupies 786–824; the sequence is CLRHTHRASSKNVRVFLVLYYTSQAITVTFMSQCFAGRC. Polar residues predominate over residues 848-857; it reads ASQDSTTSQL. The interval 848–874 is disordered; it reads ASQDSTTSQLARRRDRQDGSFSETLPN.

This sequence belongs to the herpesviridae DNA primase family. In terms of assembly, associates with the helicase and the primase-associated factor to form the helicase-primase factor.

Its subcellular location is the host nucleus. Essential component of the helicase/primase complex. Unwinds the DNA at the replication forks and generates single-stranded DNA for both leading and lagging strand synthesis. The primase initiates primer synthesis and thereby produces large amount of short RNA primers on the lagging strand that the polymerase elongates using dNTPs. This is DNA primase from Epstein-Barr virus (strain B95-8) (HHV-4).